We begin with the raw amino-acid sequence, 604 residues long: Kelch-like protein 15 (604 aa).

The 68-residue stretch at 31–98 (LDVTLVIEDH…MYYGTIELSM (68 aa)) folds into the BTB domain. Positions 133–237 (CAEIMRLLDD…TPTSVFEKVK (105 aa)) constitute a BACK domain. Kelch repeat units lie at residues 328–379 (FVFL…VIGK), 381–426 (IYAV…VLNN), 428–473 (LFIT…NKSK), 489–542 (KLYV…VLDK), and 544–590 (IMVL…VCNL).

Homodimer. Dimerization does not affect PPP2R5B-binding, but is required for its proteasomal degradation. Interacts with CUL3. Directly interacts with PPP2R5B; this interaction leads to PPP2R5B proteasomal degradation. Interacts with RBBP8/CtIP; this interaction leads to RBBP8 proteasomal degradation. Interacts with PACMP micropeptide; interaction prevents ubiquitination and degradation of RBBP8/CtIP.

It localises to the nucleus. It participates in protein modification; protein ubiquitination. Its function is as follows. Substrate-specific adapter for CUL3 E3 ubiquitin-protein ligase complex. Acts as an adapter for CUL3 to target the serine/threonine-protein phosphatase 2A (PP2A) subunit PPP2R5B for ubiquitination and subsequent proteasomal degradation, thus promoting exchange with other regulatory subunits. Acts as an adapter for CUL3 to target the DNA-end resection factor RBBP8/CtIP for ubiquitination and subsequent proteasomal degradation. Through the regulation of RBBP8/CtIP protein turnover, plays a key role in DNA damage response, favoring DNA double-strand repair through error-prone non-homologous end joining (NHEJ) over error-free, RBBP8-mediated homologous recombination (HR). The polypeptide is Kelch-like protein 15 (KLHL15) (Homo sapiens (Human)).